A 494-amino-acid polypeptide reads, in one-letter code: Acetyl-coenzyme A carboxylase carboxyl transferase subunit beta, chloroplastic (494 aa).

The 265-residue stretch at L230–N494 folds into the CoA carboxyltransferase N-terminal domain. C234, C237, C253, and C256 together coordinate Zn(2+). A C4-type zinc finger spans residues C234–C256.

This sequence belongs to the AccD/PCCB family. As to quaternary structure, acetyl-CoA carboxylase is a heterohexamer composed of biotin carboxyl carrier protein, biotin carboxylase and 2 subunits each of ACCase subunit alpha and ACCase plastid-coded subunit beta (accD). It depends on Zn(2+) as a cofactor.

The protein localises to the plastid. Its subcellular location is the chloroplast stroma. It catalyses the reaction N(6)-carboxybiotinyl-L-lysyl-[protein] + acetyl-CoA = N(6)-biotinyl-L-lysyl-[protein] + malonyl-CoA. It participates in lipid metabolism; malonyl-CoA biosynthesis; malonyl-CoA from acetyl-CoA: step 1/1. Functionally, component of the acetyl coenzyme A carboxylase (ACC) complex. Biotin carboxylase (BC) catalyzes the carboxylation of biotin on its carrier protein (BCCP) and then the CO(2) group is transferred by the transcarboxylase to acetyl-CoA to form malonyl-CoA. The chain is Acetyl-coenzyme A carboxylase carboxyl transferase subunit beta, chloroplastic from Drimys granadensis.